Consider the following 308-residue polypeptide: NADH-cytochrome b5 reductase 1 (308 aa).

Residues 29-49 (VASSPAFLVAAAAIVIAAAFY) form a helical membrane-spanning segment. The 104-residue stretch at 64–167 (SIWKEFPLQK…KGPKGNFKYT (104 aa)) folds into the FAD-binding FR-type domain. Residues 147–162 (ASLK…GPKG) and 173–205 (HLGM…NITL) each bind FAD.

It belongs to the flavoprotein pyridine nucleotide cytochrome reductase family. As to quaternary structure, monomer. Component of the 2-(3-amino-3-carboxypropyl)histidine synthase complex composed of DPH1, DPH2, DPH3 and a NADH-dependent reductase, predominantly MCR1.1. The cofactor is FAD.

The protein resides in the mitochondrion outer membrane. It catalyses the reaction 2 Fe(III)-[cytochrome b5] + NADH = 2 Fe(II)-[cytochrome b5] + NAD(+) + H(+). The catalysed reaction is 2 Fe(3+)-[Dph3] + NADH = 2 Fe(2+)-[Dph3] + NAD(+) + H(+). It participates in protein modification; peptidyl-diphthamide biosynthesis. NADH-dependent reductase for DPH3 and cytochrome b5. Required for the first step of diphthamide biosynthesis, a post-translational modification of histidine which occurs in elongation factor 2. DPH1 and DPH2 transfer a 3-amino-3-carboxypropyl (ACP) group from S-adenosyl-L-methionine (SAM) to a histidine residue, the reaction is assisted by a reduction system comprising DPH3 and a NADH-dependent reductase, predominantly MCR1.1. By reducing DPH3, also involved in the formation of the tRNA wobble base modification mcm5s 2U (5-methoxycarbonylmethyl-2-thiouridine), mediated by the elongator complex. The cytochrome b5/NADH cytochrome b5 reductase electron transfer system supports the catalytic activity of several sterol biosynthetic enzymes. In Laccaria bicolor (strain S238N-H82 / ATCC MYA-4686) (Bicoloured deceiver), this protein is NADH-cytochrome b5 reductase 1 (MCR1.1).